Consider the following 355-residue polypeptide: N-acetyl-gamma-glutamyl-phosphate reductase (355 aa).

C152 is an active-site residue.

This sequence belongs to the NAGSA dehydrogenase family. Type 1 subfamily.

The protein resides in the cytoplasm. The enzyme catalyses N-acetyl-L-glutamate 5-semialdehyde + phosphate + NADP(+) = N-acetyl-L-glutamyl 5-phosphate + NADPH + H(+). Its pathway is amino-acid biosynthesis; L-arginine biosynthesis; N(2)-acetyl-L-ornithine from L-glutamate: step 3/4. Functionally, catalyzes the NADPH-dependent reduction of N-acetyl-5-glutamyl phosphate to yield N-acetyl-L-glutamate 5-semialdehyde. The polypeptide is N-acetyl-gamma-glutamyl-phosphate reductase (Psychrobacter cryohalolentis (strain ATCC BAA-1226 / DSM 17306 / VKM B-2378 / K5)).